Here is a 242-residue protein sequence, read N- to C-terminus: Phosphoribosylaminoimidazole-succinocarboxamide synthase (242 aa).

This sequence belongs to the SAICAR synthetase family.

It catalyses the reaction 5-amino-1-(5-phospho-D-ribosyl)imidazole-4-carboxylate + L-aspartate + ATP = (2S)-2-[5-amino-1-(5-phospho-beta-D-ribosyl)imidazole-4-carboxamido]succinate + ADP + phosphate + 2 H(+). It functions in the pathway purine metabolism; IMP biosynthesis via de novo pathway; 5-amino-1-(5-phospho-D-ribosyl)imidazole-4-carboxamide from 5-amino-1-(5-phospho-D-ribosyl)imidazole-4-carboxylate: step 1/2. This Magnetococcus marinus (strain ATCC BAA-1437 / JCM 17883 / MC-1) protein is Phosphoribosylaminoimidazole-succinocarboxamide synthase.